We begin with the raw amino-acid sequence, 242 residues long: Probable transcriptional regulatory protein lp_2253 (242 aa).

The disordered stretch occupies residues 1–21 (MSGHSKWHNIQGRKNAQDAKR).

This sequence belongs to the TACO1 family.

The protein resides in the cytoplasm. The chain is Probable transcriptional regulatory protein lp_2253 from Lactiplantibacillus plantarum (strain ATCC BAA-793 / NCIMB 8826 / WCFS1) (Lactobacillus plantarum).